A 697-amino-acid polypeptide reads, in one-letter code: Elongation factor G 2 (697 aa).

The 276-residue stretch at 5–280 (SKYRNIGIFA…AVVDYLPAPD (276 aa)) folds into the tr-type G domain. GTP-binding positions include 14–21 (AHVDAGKT), 78–82 (DTPGH), and 132–135 (NKLD).

Belongs to the TRAFAC class translation factor GTPase superfamily. Classic translation factor GTPase family. EF-G/EF-2 subfamily.

The protein localises to the cytoplasm. Catalyzes the GTP-dependent ribosomal translocation step during translation elongation. During this step, the ribosome changes from the pre-translocational (PRE) to the post-translocational (POST) state as the newly formed A-site-bound peptidyl-tRNA and P-site-bound deacylated tRNA move to the P and E sites, respectively. Catalyzes the coordinated movement of the two tRNA molecules, the mRNA and conformational changes in the ribosome. In Shewanella denitrificans (strain OS217 / ATCC BAA-1090 / DSM 15013), this protein is Elongation factor G 2.